The sequence spans 1218 residues: Mgp-operon protein 3 (1218 aa).

An N-terminal signal peptide occupies residues 1-25 (MKSKLKLKRYLLFLPLLPLGTLSLA). 4 disordered regions span residues 109–129 (QESQ…SGSN), 213–245 (HFGS…GFKL), 262–353 (EPLD…AVVS), and 411–440 (QDAT…PALT). A compositionally biased stretch (low complexity) spans 116 to 129 (NGSQSGSSDTSGSN). The span at 217–231 (GQESSWNSQRSQKGL) shows a compositional bias: polar residues. A compositionally biased stretch (basic and acidic residues) spans 265–286 (DSTKEGKGKDESSWKNSEKTTA). A compositionally biased stretch (low complexity) spans 301 to 342 (AGSASSLQGNGSNSSGLKSLLRSAPVSVPPSSTSNQTLSLSN). Residues 411–428 (QDATSTNLPHAAGASQTG) show a composition bias toward polar residues. A helical membrane pass occupies residues 1121–1141 (VGSSVGILLILLILGLGIGIP). Low complexity predominate over residues 1192–1204 (NNAAPKAPVKPAA). The tract at residues 1192-1218 (NNAAPKAPVKPAAPTAPRPPVQPPKKA) is disordered. Pro residues predominate over residues 1205-1218 (PTAPRPPVQPPKKA).

The protein resides in the cell membrane. This is Mgp-operon protein 3 from Mycoplasma pneumoniae (strain ATCC 29342 / M129 / Subtype 1) (Mycoplasmoides pneumoniae).